Reading from the N-terminus, the 614-residue chain is UvrABC system protein C (614 aa).

The GIY-YIG domain maps to 12-89 (DKPGVYLFRG…IKEHRPRYNV (78 aa)). One can recognise a UVR domain in the interval 198–233 (ADLVRGLARKMEAAAANLEFERAAELRDQLRAVEQV).

This sequence belongs to the UvrC family. In terms of assembly, interacts with UvrB in an incision complex.

The protein resides in the cytoplasm. In terms of biological role, the UvrABC repair system catalyzes the recognition and processing of DNA lesions. UvrC both incises the 5' and 3' sides of the lesion. The N-terminal half is responsible for the 3' incision and the C-terminal half is responsible for the 5' incision. This chain is UvrABC system protein C, found in Desulforudis audaxviator (strain MP104C).